We begin with the raw amino-acid sequence, 397 residues long: 1-deoxy-D-xylulose 5-phosphate reductoisomerase (397 aa).

NADPH contacts are provided by Thr-10, Gly-11, Ser-12, Ile-13, Gly-36, Lys-37, Asn-38, and Asn-124. Lys-125 lines the 1-deoxy-D-xylulose 5-phosphate pocket. Position 126 (Glu-126) interacts with NADPH. Asp-150 is a Mn(2+) binding site. Positions 151, 152, 186, and 209 each coordinate 1-deoxy-D-xylulose 5-phosphate. Glu-152 lines the Mn(2+) pocket. Gly-215 serves as a coordination point for NADPH. The 1-deoxy-D-xylulose 5-phosphate site is built by Ser-222, Asn-227, Lys-228, and Glu-231. Position 231 (Glu-231) interacts with Mn(2+).

Belongs to the DXR family. In terms of assembly, homodimer. Requires Mg(2+) as cofactor. Mn(2+) serves as cofactor.

It carries out the reaction 2-C-methyl-D-erythritol 4-phosphate + NADP(+) = 1-deoxy-D-xylulose 5-phosphate + NADPH + H(+). It participates in isoprenoid biosynthesis; isopentenyl diphosphate biosynthesis via DXP pathway; isopentenyl diphosphate from 1-deoxy-D-xylulose 5-phosphate: step 1/6. Functionally, catalyzes the NADPH-dependent rearrangement and reduction of 1-deoxy-D-xylulose-5-phosphate (DXP) to 2-C-methyl-D-erythritol 4-phosphate (MEP). The polypeptide is 1-deoxy-D-xylulose 5-phosphate reductoisomerase (Proteus mirabilis (strain HI4320)).